A 240-amino-acid polypeptide reads, in one-letter code: Gas vesicle protein C (240 aa).

The segment covering 1–13 has biased composition (basic and acidic residues); sequence MALKDKWQQDRIG. The tract at residues 1–20 is disordered; it reads MALKDKWQQDRIGRQQGVQE. Repeats lie at residues 18-50, 51-83, 84-116, 117-149, and 150-207; these read VQERQQQVQTTLSLWQQERQNQALDDQESRQGF, VTGVQQQTQELLTNISTERLWVAQQQREQLENF, IQQLSQEVGEFLQQTIEERSQVAAQLHQQLSEF, REDLEYRVTDLLANYQKQRLEARETLLEDLAIF, and RQTL…LQDY. Residues 18 to 207 form a 5 X 33 AA tandem repeats region; that stretch reads VQERQQQVQT…GVFRAELQDY (190 aa).

It belongs to the gas vesicle GvpC family.

It is found in the gas vesicle. Confers stability, involved in shaping gas vesicles, hollow, gas filled proteinaceous nanostructures. During planktonic growth they allow positioning of the organism at a favorable depth for light or nutrient acquisition. The polypeptide is Gas vesicle protein C (Planktothrix agardhii (Oscillatoria agardhii)).